We begin with the raw amino-acid sequence, 148 residues long: UPF0260 protein ECA2365 (148 aa).

This sequence belongs to the UPF0260 family.

This is UPF0260 protein ECA2365 from Pectobacterium atrosepticum (strain SCRI 1043 / ATCC BAA-672) (Erwinia carotovora subsp. atroseptica).